The sequence spans 1210 residues: Epidermal growth factor receptor (1210 aa).

Positions 1 to 24 (MRPSGTARTTLLVLLTALCAAGGA) are cleaved as a signal peptide. Residues 25-647 (LEEKKVCQGT…VWPSGPKIPS (623 aa)) are Extracellular-facing. The cysteines at positions 31 and 58 are disulfide-linked. Residues 75-300 (DLSFLKTIQE…CVKKCPRNYV (226 aa)) form an Approximate repeat. Residues asparagine 128, asparagine 175, and asparagine 196 are each glycosylated (N-linked (GlcNAc...) asparagine). 13 disulfide bridges follow: cysteine 157–cysteine 187, cysteine 190–cysteine 199, cysteine 194–cysteine 207, cysteine 215–cysteine 223, cysteine 219–cysteine 231, cysteine 232–cysteine 240, cysteine 236–cysteine 248, cysteine 251–cysteine 260, cysteine 264–cysteine 291, cysteine 295–cysteine 307, cysteine 311–cysteine 326, cysteine 329–cysteine 333, and cysteine 337–cysteine 362. Serine 229 bears the Phosphoserine mark. N-linked (GlcNAc...) asparagine glycans are attached at residues asparagine 352, asparagine 413, and asparagine 444. The stretch at 390 to 600 (RELEILKTVK…CVKTCPAGIM (211 aa)) is one Approximate repeat. Cystine bridges form between cysteine 470-cysteine 499, cysteine 506-cysteine 515, cysteine 510-cysteine 523, cysteine 526-cysteine 535, cysteine 539-cysteine 555, cysteine 558-cysteine 571, cysteine 562-cysteine 579, cysteine 582-cysteine 591, cysteine 595-cysteine 617, cysteine 620-cysteine 628, and cysteine 624-cysteine 636. Asparagine 528 is a glycosylation site (N-linked (GlcNAc...) asparagine). The N-linked (GlcNAc...) asparagine glycan is linked to asparagine 568. 2 N-linked (GlcNAc...) asparagine glycosylation sites follow: asparagine 603 and asparagine 623. Residues 648 to 670 (IATGIVGGLLFIVVVALGIGLFM) traverse the membrane as a helical segment. Over 671–1210 (RRRHIVRKRT…APPSSEFIGA (540 aa)) the chain is Cytoplasmic. Threonine 680 carries the phosphothreonine; by PKC and PKD/PRKD1 modification. The segment at 690–706 (LVEPLTPSGEAPNQAHL) is important for dimerization, phosphorylation and activation. Threonine 695 carries the phosphothreonine; by PKD/PRKD1 modification. Serine 697 is subject to Phosphoserine. In terms of domain architecture, Protein kinase spans 714-981 (FKKIKVLGSG…KMARDPQRYL (268 aa)). A Glycyl lysine isopeptide (Lys-Gly) (interchain with G-Cter in ubiquitin) cross-link involves residue lysine 718. ATP is bound at residue 720 to 728 (LGSGAFGTV). A Glycyl lysine isopeptide (Lys-Gly) (interchain with G-Cter in ubiquitin) cross-link involves residue lysine 739. ATP is bound at residue lysine 747. An N6-(2-hydroxyisobutyryl)lysine modification is found at lysine 747. Residues lysine 756 and lysine 759 each participate in a glycyl lysine isopeptide (Lys-Gly) (interchain with G-Cter in ubiquitin) cross-link. An ATP-binding site is contributed by 792-793 (TQ). Aspartate 839 (proton acceptor) is an active-site residue. Residue aspartate 857 coordinates ATP. Lysine 869 participates in a covalent cross-link: Glycyl lysine isopeptide (Lys-Gly) (interchain with G-Cter in ubiquitin). Tyrosine 871 carries the phosphotyrosine modification. Residues lysine 931, lysine 962, and lysine 972 each participate in a glycyl lysine isopeptide (Lys-Gly) (interchain with G-Cter in ubiquitin) cross-link. A phosphoserine mark is found at serine 993 and serine 997. Phosphotyrosine; by autocatalysis is present on residues tyrosine 1000 and tyrosine 1018. Residues serine 1028 and serine 1041 each carry the phosphoserine modification. Threonine 1043 bears the Phosphothreonine mark. Residue serine 1044 is modified to Phosphoserine. Cysteine 1051 carries the S-palmitoyl cysteine lipid modification. Position 1069 is a phosphotyrosine (tyrosine 1069). Residues serine 1070 and serine 1071 each carry the phosphoserine modification. Residues tyrosine 1092 and tyrosine 1110 each carry the phosphotyrosine; by autocatalysis modification. The disordered stretch occupies residues 1113–1137 (QPLHPAPGRDLHYQNPHSNAVGNPE). The segment covering 1127 to 1137 (NPHSNAVGNPE) has biased composition (polar residues). Residue cysteine 1146 is the site of S-palmitoyl cysteine attachment. Serine 1166 bears the Phosphoserine mark. Tyrosine 1172 carries the post-translational modification Phosphotyrosine; by autocatalysis. A Phosphotyrosine modification is found at tyrosine 1197. Position 1199 is an omega-N-methylarginine (arginine 1199).

This sequence belongs to the protein kinase superfamily. Tyr protein kinase family. EGF receptor subfamily. As to quaternary structure, binding of the ligand triggers homo- and/or heterodimerization of the receptor triggering its autophosphorylation. Heterodimer with ERBB2. Forms a complex with CCDC88A/GIV (via SH2-like region) and GNAI3 which leads to enhanced EGFR signaling and triggering of cell migration; binding of CCDC88A requires autophosphorylation of the EGFR C-terminal region, and ligand stimulation is required for recruitment of GNAI3 to the complex. Interacts with ERRFI1; inhibits dimerization of the kinase domain and autophosphorylation. Part of a complex with ERBB2 and either PIK3C2A or PIK3C2B. Interacts with GRB2; an adapter protein coupling the receptor to downstream signaling pathways. Interacts with GAB2; involved in signaling downstream of EGFR. Interacts with STAT3; mediates EGFR downstream signaling in cell proliferation. Interacts with RIPK1; involved in NF-kappa-B activation. Interacts (autophosphorylated) with CBL, CBLB and CBLC; involved in EGFR ubiquitination and regulation; interaction with CBL is reduced in the presence of tensin TNS4. Interacts with SOCS5; regulates EGFR degradation through ELOC- and ELOB-mediated ubiquitination and proteasomal degradation. Interacts with PRMT5; methylates EGFR and enhances interaction with PTPN6. Interacts (phosphorylated) with PTPN6; inhibits EGFR-dependent activation of MAPK/ERK. Interacts with COPG1; essential for regulation of EGF-dependent nuclear transport of EGFR by retrograde trafficking from the Golgi to the ER. Interacts with TNK2; this interaction is dependent on EGF stimulation and kinase activity of EGFR. Interacts with PCNA; positively regulates PCNA. Interacts with PELP1. Interacts with MUC1. Interacts with AP2M1. Interacts with FER. Interacts (via SH2 domains) with GRB2, NCK1 and NCK2. Interacts with EPS8; mediates EPS8 phosphorylation. Interacts with ATXN2. Interacts with GAREM1. Interacts (ubiquitinated) with ANKRD13A/B/D; the interaction is direct and may regulate EGFR internalization after EGF stimulation. Interacts with GPER1; the interaction occurs in an estrogen-dependent manner. Interacts (via C-terminal cytoplasmic kinase domain) with ZPR1 (via zinc fingers). Interacts with RNF115 and RNF126. Interacts with GPRC5A (via its transmembrane domain). Interacts with FAM83B; positively regulates EGFR inducing its autophosphorylation in absence of stimulation by EGF. Interacts with LAPTM4B; positively correlates with EGFR activation. Interacts with STX19. Interacts with CD44. Interacts with PGRMC1; the interaction requires PGRMC1 homodimerization. Interacts with PIKFYVE. Interacts with NEU3. Interacts with TRAF4. Interacts with the ant venom OMEGA-myrmeciitoxin(02)-Mg1a. Interacts with CD82; this interaction facilitates ligand-induced endocytosis of the receptor and its subsequent desensitization. Post-translationally, monoubiquitinated and polyubiquitinated upon EGF stimulation; which does not affect tyrosine kinase activity or signaling capacity but may play a role in lysosomal targeting. Polyubiquitin linkage is mainly through 'Lys-63', but linkage through 'Lys-48', 'Lys-11' and 'Lys-29' also occurs. Deubiquitinated by OTUD7B, preventing degradation. Ubiquitinated by RNF115 and RNF126. Ubiquitinated by ZNRF1 or CBL at different lysines in response to EGF stimulation; leading to recruitment of the ESCRT machinery and subsequent degradation in the lysosomes. Deubiquitinated by UCHL1 leading to the inhibition of its degradation. In terms of processing, phosphorylated on Tyr residues in response to EGF. Phosphorylation at Ser-697 is partial and occurs only if Thr-695 is phosphorylated. Phosphorylation at Thr-680 and Thr-695 by PRKD1 inhibits EGF-induced MAPK8/JNK1 activation. Dephosphorylation by PTPRJ prevents endocytosis and stabilizes the receptor at the plasma membrane. Autophosphorylation at Tyr-1199 is stimulated by methylation at Arg-1199 and enhances interaction with PTPN6. Autophosphorylation at Tyr-1092 and/or Tyr-1110 recruits STAT3. Dephosphorylated by PTPN1 and PTPN2. Palmitoylated on Cys residues by ZDHHC20. Palmitoylation inhibits internalization after ligand binding, and increases the persistence of tyrosine-phosphorylated EGFR at the cell membrane. Palmitoylation increases the amplitude and duration of EGFR signaling. Post-translationally, methylated. Methylation at Arg-1199 by PRMT5 stimulates phosphorylation at Tyr-1197.

The protein localises to the cell membrane. It is found in the endoplasmic reticulum membrane. The protein resides in the golgi apparatus membrane. Its subcellular location is the nucleus membrane. It localises to the endosome. The protein localises to the endosome membrane. It is found in the nucleus. It catalyses the reaction L-tyrosyl-[protein] + ATP = O-phospho-L-tyrosyl-[protein] + ADP + H(+). Endocytosis and inhibition of the activated EGFR by phosphatases like PTPRJ and PTPRK constitute immediate regulatory mechanisms. Upon EGF-binding phosphorylates EPS15 that regulates EGFR endocytosis and activity. Moreover, inducible feedback inhibitors including LRIG1, SOCS4, SOCS5 and ERRFI1 constitute alternative regulatory mechanisms for the EGFR signaling. Receptor tyrosine kinase binding ligands of the EGF family and activating several signaling cascades to convert extracellular cues into appropriate cellular responses. Known ligands include EGF, TGFA/TGF-alpha, AREG, epigen/EPGN, BTC/betacellulin, epiregulin/EREG and HBEGF/heparin-binding EGF. Ligand binding triggers receptor homo- and/or heterodimerization and autophosphorylation on key cytoplasmic residues. The phosphorylated receptor recruits adapter proteins like GRB2 which in turn activates complex downstream signaling cascades. Activates at least 4 major downstream signaling cascades including the RAS-RAF-MEK-ERK, PI3 kinase-AKT, PLCgamma-PKC and STATs modules. May also activate the NF-kappa-B signaling cascade. Also directly phosphorylates other proteins like RGS16, activating its GTPase activity and probably coupling the EGF receptor signaling to the G protein-coupled receptor signaling. Also phosphorylates MUC1 and increases its interaction with SRC and CTNNB1/beta-catenin. Positively regulates cell migration via interaction with CCDC88A/GIV which retains EGFR at the cell membrane following ligand stimulation, promoting EGFR signaling which triggers cell migration. Plays a role in enhancing learning and memory performance. Plays a role in mammalian pain signaling (long-lasting hypersensitivity). The chain is Epidermal growth factor receptor from Mus musculus (Mouse).